We begin with the raw amino-acid sequence, 166 residues long: uncharacterized protein (166 aa).

This is an uncharacterized protein from Enterobacteria phage T4 (Bacteriophage T4).